A 217-amino-acid chain; its full sequence is UPF0193 protein EVG1 (217 aa).

Belongs to the UPF0193 (EVG1) family.

In Homo sapiens (Human), this protein is UPF0193 protein EVG1 (C22orf23).